The primary structure comprises 189 residues: GTPase NRas (189 aa).

GTP is bound at residue 10 to 17; the sequence is GAGGVGKS. An Effector region motif is present at residues 32-40; the sequence is YDPTIEDSY. Residues 57–61 and 116–119 each bind GTP; these read DTAGQ and NKCD. The tract at residues 166–185 is hypervariable region; it reads YRMKKLDSSEDNNQGCIRIP. A lipid anchor (S-palmitoyl cysteine) is attached at Cys-181. Cys-186 is lipidated: S-farnesyl cysteine. A propeptide spans 187-189 (removed in mature form); sequence KLM.

It belongs to the small GTPase superfamily. Ras family. Post-translationally, palmitoylated by the ZDHHC9-GOLGA7 complex. Depalmitoylated by abhd17a, abhd17b and abhd17c. A continuous cycle of de- and re-palmitoylation regulates rapid exchange between plasma membrane and Golgi.

It is found in the cell membrane. It localises to the golgi apparatus membrane. The enzyme catalyses GTP + H2O = GDP + phosphate + H(+). With respect to regulation, alternates between an inactive form bound to GDP and an active form bound to GTP. Activated by a guanine nucleotide-exchange factor (GEF) and inactivated by a GTPase-activating protein (GAP). In terms of biological role, ras proteins bind GDP/GTP and possess intrinsic GTPase activity. This Xenopus laevis (African clawed frog) protein is GTPase NRas (nras).